The sequence spans 464 residues: UDP-N-acetylmuramate--L-alanine ligase (464 aa).

An ATP-binding site is contributed by 111 to 117 (GAHGKTT).

This sequence belongs to the MurCDEF family.

The protein localises to the cytoplasm. The enzyme catalyses UDP-N-acetyl-alpha-D-muramate + L-alanine + ATP = UDP-N-acetyl-alpha-D-muramoyl-L-alanine + ADP + phosphate + H(+). It functions in the pathway cell wall biogenesis; peptidoglycan biosynthesis. Its function is as follows. Cell wall formation. The protein is UDP-N-acetylmuramate--L-alanine ligase of Dictyoglomus turgidum (strain DSM 6724 / Z-1310).